We begin with the raw amino-acid sequence, 584 residues long: Endoribonuclease YBEY, chloroplastic (584 aa).

The N-terminal 50 residues, 1-50, are a transit peptide targeting the chloroplast; the sequence is MLSRVCPTLRYNRIWSAHAREMPRATLLLLQPNFFHSSPKTALVNRLDVT. Residues histidine 240, histidine 244, and histidine 250 each contribute to the Zn(2+) site.

The protein belongs to the endoribonuclease YbeY family. Zn(2+) is required as a cofactor.

It localises to the plastid. The protein resides in the chloroplast stroma. Its function is as follows. Endoribonuclease required for chloroplast ribosomal RNA (rRNA) processing and essential for normal growth and development. May be involved in maturation of both the 5' and 3' ends of 16S, 23S, and 4.5S rRNAs. Cleaves chloroplast rRNAs, mRNAs and tRNAs in vitro. This is Endoribonuclease YBEY, chloroplastic from Arabidopsis thaliana (Mouse-ear cress).